The primary structure comprises 277 residues: Small ribosomal subunit protein uS5 (277 aa).

The segment at 18-40 (AAGRPSWSWQRPGERARTPGRKA) is disordered. A compositionally biased stretch (basic and acidic residues) spans 29–40 (PGERARTPGRKA). Positions 87 to 150 (LKDEVLKIMP…ILAKLSIIPV (64 aa)) constitute an S5 DRBM domain.

It belongs to the universal ribosomal protein uS5 family. In terms of assembly, component of the small ribosomal subunit.

It is found in the cytoplasm. It localises to the nucleus. Its subcellular location is the nucleolus. Component of the ribosome, a large ribonucleoprotein complex responsible for the synthesis of proteins in the cell. The small ribosomal subunit (SSU) binds messenger RNAs (mRNAs) and translates the encoded message by selecting cognate aminoacyl-transfer RNA (tRNA) molecules. The large subunit (LSU) contains the ribosomal catalytic site termed the peptidyl transferase center (PTC), which catalyzes the formation of peptide bonds, thereby polymerizing the amino acids delivered by tRNAs into a polypeptide chain. The nascent polypeptides leave the ribosome through a tunnel in the LSU and interact with protein factors that function in enzymatic processing, targeting, and the membrane insertion of nascent chains at the exit of the ribosomal tunnel. Plays a role in the assembly and function of the 40S ribosomal subunit. Mutations in this protein affects the control of translational fidelity. Involved in nucleolar processing of pre-18S ribosomal RNA and ribosome assembly. The sequence is that of Small ribosomal subunit protein uS5 (rps2) from Ictalurus punctatus (Channel catfish).